We begin with the raw amino-acid sequence, 922 residues long: Metabotropic glutamate receptor 7 (922 aa).

Residues 1 to 34 (MVQLRKLLRVLTLMKFPCCVLEVLLCALAAAARG) form the signal peptide. The Extracellular portion of the chain corresponds to 35–590 (QEMYAPHSIR…IIKLEWHSPW (556 aa)). Cys-67 and Cys-109 are disulfide-bonded. An N-linked (GlcNAc...) asparagine glycan is attached at Asn-98. L-glutamate is bound by residues Ser-159, 180 to 182 (AST), Tyr-230, and Asp-314. 7 cysteine pairs are disulfide-bonded: Cys-249-Cys-541, Cys-374-Cys-390, Cys-430-Cys-437, Cys-523-Cys-542, Cys-527-Cys-545, Cys-548-Cys-560, and Cys-563-Cys-576. An L-glutamate-binding site is contributed by Lys-407. 2 N-linked (GlcNAc...) asparagine glycosylation sites follow: Asn-458 and Asn-486. Asn-572 is a glycosylation site (N-linked (GlcNAc...) asparagine). The chain crosses the membrane as a helical span at residues 591–615 (AVIPVFLAMLGIIATIFVMATFIRY). At 616–627 (NDTPIVRASGRE) the chain is on the cytoplasmic side. The chain crosses the membrane as a helical span at residues 628 to 648 (LSYVLLTGIFLCYIITFLMIA). The Extracellular portion of the chain corresponds to 649-654 (KPDVAV). The helical transmembrane segment at 655–675 (CSFRRVFLGLGMCISYAALLT) threads the bilayer. Over 676–702 (KTNRIYRIFEQGKKSVTAPRLISPTSQ) the chain is Cytoplasmic. Residues 703–723 (LAITSSLISVQLLGVFIWFGV) traverse the membrane as a helical segment. Residues 724–753 (DPPNIIIDYDEHKTMNPEQARGVLKCDITD) lie on the Extracellular side of the membrane. A helical transmembrane segment spans residues 754 to 775 (LQIICSLGYSILLMVTCTVYAI). Residues 776-788 (KTRGVPENFNEAK) are Cytoplasmic-facing. A helical membrane pass occupies residues 789–810 (PIGFTMYTTCIVWLAFIPIFFG). Topologically, residues 811-825 (TAQSAEKLYIQTTTL) are extracellular. A helical membrane pass occupies residues 826-850 (TISMNLSASVALGMLYMPKVYIIIF). Topologically, residues 851–922 (HPELNVQKRK…VTWYTIPPTV (72 aa)) are cytoplasmic.

Belongs to the G-protein coupled receptor 3 family. As to quaternary structure, homodimer. Interacts with PICK1.

The protein localises to the cell membrane. Its function is as follows. G-protein coupled receptor activated by glutamate that regulates axon outgrowth through the MAPK-cAMP-PKA signaling pathway during neuronal development. Ligand binding causes a conformation change that triggers signaling via guanine nucleotide-binding proteins (G proteins) and modulates the activity of downstream effectors, such as adenylate cyclase that it inhibits. The sequence is that of Metabotropic glutamate receptor 7 (GRM7) from Pongo abelii (Sumatran orangutan).